We begin with the raw amino-acid sequence, 1755 residues long: Transposon Ty1-PL Gag-Pol polyprotein (1755 aa).

3 stretches are compositionally biased toward polar residues: residues 1–23 (MESQQLSQHSPISHGSACASVTS), 48–60 (TKANSQQTTTPAS), and 127–152 (QSQFPQYPSSVGTPLSTPSPESGNTF). Disordered regions lie at residues 1-93 (MESQ…MMTQ), 126-174 (PQSQ…PPPM), and 352-421 (GSRN…SKST). Residues 153–165 (TDSSSADSDMTST) show a composition bias toward low complexity. The RNA-binding stretch occupies residues 299 to 401 (NNGIHINNKV…NSKSKTARAH (103 aa)). Residues 402–418 (NVSTSNNSPSTDNDSIS) show a composition bias toward low complexity. S416 carries the post-translational modification Phosphoserine. The active-site For protease activity; shared with dimeric partner is the D461. Positions 583-640 (NVHTSESTRKYPYPFIHRMLAHANAQTIRYSLKNNTITYFNESDVDWSSAIDYQCPDC) are integrase-type zinc finger-like. The 176-residue stretch at 660-835 (NSYEPFQYLH…AGLDISTLLP (176 aa)) folds into the Integrase catalytic domain. D671 and D736 together coordinate Mg(2+). Disordered regions lie at residues 956–1087 (SKAV…ETEK), 1092–1111 (RSPSIDASPPENNSSHNIVP), and 1130–1187 (DLPL…DNET). Residues 960 to 969 (SPTDSTPPST) are compositionally biased toward low complexity. Residues 1005-1015 (STPQISNIEST) show a composition bias toward polar residues. Basic and acidic residues predominate over residues 1038 to 1053 (ESSHASKSKDFRHSDS). 2 stretches are compositionally biased toward polar residues: residues 1054 to 1082 (YSENETNHTNVPISSTGGTNNKTVPQISD) and 1101 to 1111 (PENNSSHNIVP). The Bipartite nuclear localization signal motif lies at 1178 to 1212 (KKRSLEDNETEIKVSRDTWNTKNMRSLEPPRSKKR). In terms of domain architecture, Reverse transcriptase Ty1/copia-type spans 1338–1476 (NNYYITQLDI…DILGLEIKYQ (139 aa)). Residues D1346, D1427, D1428, D1610, E1652, and D1685 each coordinate Mg(2+). The RNase H Ty1/copia-type domain maps to 1610-1752 (DASYGNQPYY…IKTFKLLTNK (143 aa)).

In terms of assembly, the capsid protein forms a homotrimer, from which the VLPs are assembled. The protease is a homodimer, whose active site consists of two apposed aspartic acid residues. Initially, virus-like particles (VLPs) are composed of the structural unprocessed proteins Gag and Gag-Pol, and also contain the host initiator methionine tRNA (tRNA(i)-Met) which serves as a primer for minus-strand DNA synthesis, and a dimer of genomic Ty RNA. Processing of the polyproteins occurs within the particle and proceeds by an ordered pathway, called maturation. First, the protease (PR) is released by autocatalytic cleavage of the Gag-Pol polyprotein yielding capsid protein p45 and a Pol-p154 precursor protein. This cleavage is a prerequisite for subsequent processing of Pol-p154 at the remaining sites to release the mature structural and catalytic proteins. Maturation takes place prior to the RT reaction and is required to produce transposition-competent VLPs.

Its subcellular location is the cytoplasm. The protein localises to the nucleus. The catalysed reaction is DNA(n) + a 2'-deoxyribonucleoside 5'-triphosphate = DNA(n+1) + diphosphate. It catalyses the reaction Endonucleolytic cleavage to 5'-phosphomonoester.. Functionally, capsid protein (CA) is the structural component of the virus-like particle (VLP), forming the shell that encapsulates the retrotransposons dimeric RNA genome. The particles are assembled from trimer-clustered units and there are holes in the capsid shells that allow for the diffusion of macromolecules. CA also has nucleocapsid-like chaperone activity, promoting primer tRNA(i)-Met annealing to the multipartite primer-binding site (PBS), dimerization of Ty1 RNA and initiation of reverse transcription. Its function is as follows. The aspartyl protease (PR) mediates the proteolytic cleavages of the Gag and Gag-Pol polyproteins after assembly of the VLP. Reverse transcriptase/ribonuclease H (RT) is a multifunctional enzyme that catalyzes the conversion of the retro-elements RNA genome into dsDNA within the VLP. The enzyme displays a DNA polymerase activity that can copy either DNA or RNA templates, and a ribonuclease H (RNase H) activity that cleaves the RNA strand of RNA-DNA heteroduplexes during plus-strand synthesis and hydrolyzes RNA primers. The conversion leads to a linear dsDNA copy of the retrotransposon that includes long terminal repeats (LTRs) at both ends. In terms of biological role, integrase (IN) targets the VLP to the nucleus, where a subparticle preintegration complex (PIC) containing at least integrase and the newly synthesized dsDNA copy of the retrotransposon must transit the nuclear membrane. Once in the nucleus, integrase performs the integration of the dsDNA into the host genome. In Saccharomyces cerevisiae (strain ATCC 204508 / S288c) (Baker's yeast), this protein is Transposon Ty1-PL Gag-Pol polyprotein (TY1B-PL).